Here is a 78-residue protein sequence, read N- to C-terminus: MPADIPKSVVQKLVFFTAAMIICPVATFFICQYLFSNNAIISGGVSALVANIVLIGYVVAAFMEDTTEQEPEETKKSR.

The Cytoplasmic portion of the chain corresponds to 1–14 (MPADIPKSVVQKLV). The helical transmembrane segment at 15–35 (FFTAAMIICPVATFFICQYLF) threads the bilayer. Residues 36-38 (SNN) are Lumenal-facing. A helical transmembrane segment spans residues 39-59 (AIISGGVSALVANIVLIGYVV). At 60 to 78 (AAFMEDTTEQEPEETKKSR) the chain is on the cytoplasmic side. The short motif at 75-78 (KKSR) is the Prevents secretion from ER element.

It belongs to the VMA21 family.

The protein localises to the endoplasmic reticulum membrane. Its subcellular location is the endoplasmic reticulum-Golgi intermediate compartment membrane. It localises to the cytoplasmic vesicle. The protein resides in the COPII-coated vesicle membrane. Its function is as follows. Required for the assembly of the V0 complex of the vacuolar ATPase (V-ATPase) in the endoplasmic reticulum. The chain is Vacuolar ATPase assembly integral membrane protein VMA21 from Debaryomyces hansenii (strain ATCC 36239 / CBS 767 / BCRC 21394 / JCM 1990 / NBRC 0083 / IGC 2968) (Yeast).